The primary structure comprises 335 residues: Glycerol-3-phosphate dehydrogenase [NAD(P)+] (335 aa).

NADPH is bound by residues Phe11, Arg31, and Lys107. The sn-glycerol 3-phosphate site is built by Lys107 and Gly135. NADPH is bound at residue Ala139. Sn-glycerol 3-phosphate contacts are provided by Lys190, Asp245, Ser255, Arg256, and Asn257. Lys190 serves as the catalytic Proton acceptor. Arg256 serves as a coordination point for NADPH. Residues Leu280 and Glu282 each coordinate NADPH.

This sequence belongs to the NAD-dependent glycerol-3-phosphate dehydrogenase family.

Its subcellular location is the cytoplasm. It catalyses the reaction sn-glycerol 3-phosphate + NAD(+) = dihydroxyacetone phosphate + NADH + H(+). The catalysed reaction is sn-glycerol 3-phosphate + NADP(+) = dihydroxyacetone phosphate + NADPH + H(+). It participates in membrane lipid metabolism; glycerophospholipid metabolism. Functionally, catalyzes the reduction of the glycolytic intermediate dihydroxyacetone phosphate (DHAP) to sn-glycerol 3-phosphate (G3P), the key precursor for phospholipid synthesis. The chain is Glycerol-3-phosphate dehydrogenase [NAD(P)+] from Anaplasma marginale (strain St. Maries).